A 373-amino-acid chain; its full sequence is 3 beta-hydroxysteroid dehydrogenase/Delta 5--&gt;4-isomerase type 2 (373 aa).

Catalysis depends on tyrosine 155, which acts as the Proton acceptor. Lysine 159 provides a ligand contact to NAD(+). The helical transmembrane segment at 288-308 threads the bilayer; it reads LPLLYWLAFLLETVSFLLRPF.

It belongs to the 3-beta-HSD family. Adrenal glands, testes and ovaries.

The protein localises to the endoplasmic reticulum membrane. It is found in the mitochondrion membrane. It carries out the reaction a 3beta-hydroxy-Delta(5)-steroid + NAD(+) = a 3-oxo-Delta(5)-steroid + NADH + H(+). It catalyses the reaction a 3-oxo-Delta(5)-steroid = a 3-oxo-Delta(4)-steroid. The protein operates within lipid metabolism; steroid biosynthesis. Its function is as follows. 3-beta-HSD is a bifunctional enzyme, that catalyzes the oxidative conversion of Delta(5)-ene-3-beta-hydroxy steroid, and the oxidative conversion of ketosteroids. The 3-beta-HSD enzymatic system plays a crucial role in the biosynthesis of all classes of hormonal steroids. In Rattus norvegicus (Rat), this protein is 3 beta-hydroxysteroid dehydrogenase/Delta 5--&gt;4-isomerase type 2 (Hsd3b).